Here is a 798-residue protein sequence, read N- to C-terminus: Transferrin receptor protein 2 (798 aa).

Residues 1-81 (MEQRWGLLRK…WAAAGRKAAP (81 aa)) lie on the Cytoplasmic side of the membrane. Positions 23-26 (YRRV) match the Endocytosis signal motif. Residues 25 to 44 (RVEGPQLENLEEEDREEGEE) form a disordered region. Residues 33-44 (NLEEEDREEGEE) are compositionally biased toward acidic residues. A helical; Signal-anchor for type II membrane protein membrane pass occupies residues 82 to 102 (YLVLTTLLIFTGAFLLGYVAF). Over 103 to 798 (RGSCQACGDS…GDVWNIDNNF (696 aa)) the chain is Extracellular. Asn235, Asn334, and Asn535 each carry an N-linked (GlcNAc...) asparagine glycan.

It belongs to the peptidase M28 family. M28B subfamily. As to quaternary structure, homodimer.

The protein resides in the cell membrane. Mediates cellular uptake of transferrin-bound iron in a non-iron dependent manner. May be involved in iron metabolism, hepatocyte function and erythrocyte differentiation. The protein is Transferrin receptor protein 2 (Tfr2) of Rattus norvegicus (Rat).